The chain runs to 569 residues: 4-coumarate-CoA ligase 2 (569 aa).

Residues 1–24 (MITIAESHPQIHHSPPDTTAPSTP) are disordered. ATP-binding positions include 216–220 (SSGTT), H265, 337–339 (AAP), 359–360 (QG), T364, D448, R463, and K554. The interval 290–359 (EMEGMLETIQ…GRLPQAVLGQ (70 aa)) is SBD1. The segment at 360-427 (GYGMTEAGPV…VRGPQIMKGY (68 aa)) is SBD2.

This sequence belongs to the ATP-dependent AMP-binding enzyme family. In terms of tissue distribution, mostly expressed in stems, and, to a lower extent, in bulbs.

The catalysed reaction is (E)-4-coumarate + ATP + CoA = (E)-4-coumaroyl-CoA + AMP + diphosphate. It functions in the pathway phytoalexin biosynthesis; 3,4',5-trihydroxystilbene biosynthesis; 3,4',5-trihydroxystilbene from trans-4-coumarate: step 1/2. Its function is as follows. Produces CoA thioesters of a variety of hydroxy- and methoxy-substituted cinnamic acids, which are used to synthesize several phenylpropanoid-derived compounds, including anthocyanins, flavonoids, isoflavonoids, coumarins, lignin, suberin and wall-bound phenolics. The polypeptide is 4-coumarate-CoA ligase 2 (Narcissus pseudonarcissus (Daffodil)).